A 126-amino-acid polypeptide reads, in one-letter code: C-type natriuretic peptide (126 aa).

A signal peptide spans 1–23 (MHLSQLLACALLLTLLSLRPSEA). Residues 19-72 (RPSEAKPGAPPKVPRTPPGEEVAEPQAAGGGQKKGDKTPGGGGANLKGDRSRLL) form a disordered region. Residues 24–73 (KPGAPPKVPRTPPGEEVAEPQAAGGGQKKGDKTPGGGGANLKGDRSRLLR) constitute a propeptide that is removed on maturation. Residues 26–35 (GAPPKVPRTP) are compositionally biased toward pro residues. Over residues 46-63 (AGGGQKKGDKTPGGGGAN) the composition is skewed to gly residues. A disulfide bridge links C110 with C126.

The protein belongs to the natriuretic peptide family. Degraded by IDE (in vitro).

The protein localises to the secreted. Hormone which plays a role in endochondral ossification through regulation of cartilaginous growth plate chondrocytes proliferation and differentiation. May also be vasoactive and natriuretic. Acts by specifically binding and stimulating NPR2 to produce cGMP. Binds the clearance receptor NPR3. This is C-type natriuretic peptide (NPPC) from Sus scrofa (Pig).